Reading from the N-terminus, the 564-residue chain is Dihydroxy-acid dehydratase (564 aa).

Cys51 contributes to the [2Fe-2S] cluster binding site. Asp83 serves as a coordination point for Mg(2+). Cys124 contributes to the [2Fe-2S] cluster binding site. The Mg(2+) site is built by Asp125 and Lys126. Position 126 is an N6-carboxylysine (Lys126). Residue Cys196 coordinates [2Fe-2S] cluster. Glu448 provides a ligand contact to Mg(2+). Ser474 acts as the Proton acceptor in catalysis.

The protein belongs to the IlvD/Edd family. Homodimer. The cofactor is [2Fe-2S] cluster. Requires Mg(2+) as cofactor.

The enzyme catalyses (2R)-2,3-dihydroxy-3-methylbutanoate = 3-methyl-2-oxobutanoate + H2O. The catalysed reaction is (2R,3R)-2,3-dihydroxy-3-methylpentanoate = (S)-3-methyl-2-oxopentanoate + H2O. It functions in the pathway amino-acid biosynthesis; L-isoleucine biosynthesis; L-isoleucine from 2-oxobutanoate: step 3/4. Its pathway is amino-acid biosynthesis; L-valine biosynthesis; L-valine from pyruvate: step 3/4. Functions in the biosynthesis of branched-chain amino acids. Catalyzes the dehydration of (2R,3R)-2,3-dihydroxy-3-methylpentanoate (2,3-dihydroxy-3-methylvalerate) into 2-oxo-3-methylpentanoate (2-oxo-3-methylvalerate) and of (2R)-2,3-dihydroxy-3-methylbutanoate (2,3-dihydroxyisovalerate) into 2-oxo-3-methylbutanoate (2-oxoisovalerate), the penultimate precursor to L-isoleucine and L-valine, respectively. In Pyrobaculum calidifontis (strain DSM 21063 / JCM 11548 / VA1), this protein is Dihydroxy-acid dehydratase.